The sequence spans 308 residues: Aspartate carbamoyltransferase catalytic subunit (308 aa).

2 residues coordinate carbamoyl phosphate: Arg-58 and Thr-59. Lys-86 serves as a coordination point for L-aspartate. Arg-108, His-136, and Gln-139 together coordinate carbamoyl phosphate. Residues Arg-169 and Arg-227 each contribute to the L-aspartate site. Residues Gly-268 and Pro-269 each coordinate carbamoyl phosphate.

Belongs to the aspartate/ornithine carbamoyltransferase superfamily. ATCase family. In terms of assembly, heterododecamer (2C3:3R2) of six catalytic PyrB chains organized as two trimers (C3), and six regulatory PyrI chains organized as three dimers (R2).

It carries out the reaction carbamoyl phosphate + L-aspartate = N-carbamoyl-L-aspartate + phosphate + H(+). It participates in pyrimidine metabolism; UMP biosynthesis via de novo pathway; (S)-dihydroorotate from bicarbonate: step 2/3. Catalyzes the condensation of carbamoyl phosphate and aspartate to form carbamoyl aspartate and inorganic phosphate, the committed step in the de novo pyrimidine nucleotide biosynthesis pathway. This is Aspartate carbamoyltransferase catalytic subunit from Chloroflexus aggregans (strain MD-66 / DSM 9485).